Here is an 89-residue protein sequence, read N- to C-terminus: Small ribosomal subunit protein uS15 (89 aa).

This sequence belongs to the universal ribosomal protein uS15 family. In terms of assembly, part of the 30S ribosomal subunit. Forms a bridge to the 50S subunit in the 70S ribosome, contacting the 23S rRNA.

In terms of biological role, one of the primary rRNA binding proteins, it binds directly to 16S rRNA where it helps nucleate assembly of the platform of the 30S subunit by binding and bridging several RNA helices of the 16S rRNA. Functionally, forms an intersubunit bridge (bridge B4) with the 23S rRNA of the 50S subunit in the ribosome. The protein is Small ribosomal subunit protein uS15 of Syntrophomonas wolfei subsp. wolfei (strain DSM 2245B / Goettingen).